The primary structure comprises 323 residues: UDP-N-acetylenolpyruvoylglucosamine reductase (323 aa).

Positions 33 to 214 (IGGPAEALFC…LSAVFTLTHG (182 aa)) constitute an FAD-binding PCMH-type domain. The Proton donor role is filled by serine 243. Glutamate 315 is a catalytic residue.

Belongs to the MurB family. It depends on FAD as a cofactor.

It localises to the cytoplasm. It carries out the reaction UDP-N-acetyl-alpha-D-muramate + NADP(+) = UDP-N-acetyl-3-O-(1-carboxyvinyl)-alpha-D-glucosamine + NADPH + H(+). It functions in the pathway cell wall biogenesis; peptidoglycan biosynthesis. Its function is as follows. Cell wall formation. The sequence is that of UDP-N-acetylenolpyruvoylglucosamine reductase from Treponema denticola (strain ATCC 35405 / DSM 14222 / CIP 103919 / JCM 8153 / KCTC 15104).